Consider the following 185-residue polypeptide: Ribose 1,5-bisphosphate phosphokinase PhnN (185 aa).

10–17 (GPSGSGKD) is a binding site for ATP.

Belongs to the ribose 1,5-bisphosphokinase family.

It catalyses the reaction alpha-D-ribose 1,5-bisphosphate + ATP = 5-phospho-alpha-D-ribose 1-diphosphate + ADP. Its pathway is metabolic intermediate biosynthesis; 5-phospho-alpha-D-ribose 1-diphosphate biosynthesis; 5-phospho-alpha-D-ribose 1-diphosphate from D-ribose 5-phosphate (route II): step 3/3. In terms of biological role, catalyzes the phosphorylation of ribose 1,5-bisphosphate to 5-phospho-D-ribosyl alpha-1-diphosphate (PRPP). The polypeptide is Ribose 1,5-bisphosphate phosphokinase PhnN (Pseudomonas paraeruginosa (strain DSM 24068 / PA7) (Pseudomonas aeruginosa (strain PA7))).